The primary structure comprises 410 residues: Polyprenol-phosphate-mannose-dependent alpha-(1-2)-phosphatidylinositol pentamannoside mannosyltransferase (410 aa).

The next 10 membrane-spanning stretches (helical) occupy residues 31–51 (LAPMLLVVSILARLAWTYLVP), 96–116 (FAAIVFYPLHLLPFGVVAFIW), 160–180 (TFDYGQVNVVLVLAVLCAVST), 188–208 (LLVGLAAGIKLTPAVAGLYFL), 214–234 (AAVACSAAVFFATVGVSWLVV), 276–296 (GFGPLVLIGIGITAVLALLAW), 306–326 (LGGILVVSLFGLVLSPISWTH), 328–348 (WVWLIPLMMWLLHGPLSALRG), 351–371 (ILGWGWLALTLLGVPWLLSFA), and 384–404 (LAWAGLVYIVATLATLGWIAF).

It belongs to the glycosyltransferase 87 family.

The protein localises to the cell membrane. The protein operates within phospholipid metabolism; phosphatidylinositol metabolism. Its function is as follows. Catalyzes the alpha-1,2 addition of a mannose residue from polyprenol-phosphate-mannose (PPM) to a monoacyl phosphatidylinositol tetramannoside (AcPIM4) to generate a monoacyl phosphatidylinositol pentamannoside (AcPIM5). The polypeptide is Polyprenol-phosphate-mannose-dependent alpha-(1-2)-phosphatidylinositol pentamannoside mannosyltransferase (Mycolicibacterium smegmatis (strain ATCC 700084 / mc(2)155) (Mycobacterium smegmatis)).